Reading from the N-terminus, the 309-residue chain is uncharacterized protein (309 aa).

Positions 17 to 254 (RYGQKVHKLT…AGEMIRHTPP (238 aa)) constitute a Radical SAM core domain. Residues cysteine 33, cysteine 45, and cysteine 48 each contribute to the [4Fe-4S] cluster site.

Belongs to the radical SAM superfamily. The cofactor is [4Fe-4S] cluster.

This is an uncharacterized protein from Escherichia coli O157:H7.